Reading from the N-terminus, the 744-residue chain is FNIP repeat-containing protein cigB (744 aa).

FNIP repeat units lie at residues 340-376 (FNQK…TVTT), 383-422 (FNQK…TVIL), 426-462 (FNQK…TVTR), 469-508 (FNQK…TITL), 512-550 (FNQK…TTVR), 555-594 (FNQK…TVIL), 598-635 (FNQK…VTTV), 641-678 (FNQK…VTTV), and 684-723 (FNQK…NVYI).

The polypeptide is FNIP repeat-containing protein cigB (cigB) (Dictyostelium discoideum (Social amoeba)).